A 281-amino-acid polypeptide reads, in one-letter code: Phosphatidylglycerol--prolipoprotein diacylglyceryl transferase (281 aa).

The next 4 membrane-spanning stretches (helical) occupy residues 23-43, 71-91, 107-127, and 133-153; these read VGPLAVHWYGLGYVVGILFAW, FVIWAALGVVLGGRIGYVLFY, WDGGMSFHGGILGTTLAMILF, and ILVWSMFDTIAAGVPIGLGVV. R154 contributes to the a 1,2-diacyl-sn-glycero-3-phospho-(1'-sn-glycerol) binding site. Helical transmembrane passes span 189–209, 217–237, and 247–267; these read LYEAFLEGLVLFFVLFVLVWG, GFVAGAFVTGYGLSRIAVEFF, and LFGGWLTMGMVLSVPMVLLGL.

It belongs to the Lgt family.

It is found in the cell inner membrane. The catalysed reaction is L-cysteinyl-[prolipoprotein] + a 1,2-diacyl-sn-glycero-3-phospho-(1'-sn-glycerol) = an S-1,2-diacyl-sn-glyceryl-L-cysteinyl-[prolipoprotein] + sn-glycerol 1-phosphate + H(+). It functions in the pathway protein modification; lipoprotein biosynthesis (diacylglyceryl transfer). Catalyzes the transfer of the diacylglyceryl group from phosphatidylglycerol to the sulfhydryl group of the N-terminal cysteine of a prolipoprotein, the first step in the formation of mature lipoproteins. This is Phosphatidylglycerol--prolipoprotein diacylglyceryl transferase from Brucella abortus (strain S19).